The sequence spans 326 residues: Nitrogen metabolite regulation-like protein bik4 (326 aa).

Residues 13 to 18 and 161 to 164 contribute to the NADP(+) site; these read GATGEV and FASN.

It belongs to the NmrA-type oxidoreductase family.

Its function is as follows. Nitrogen metabolite regulation-like protein involved in the regulation of the gene cluster that mediates the biosynthesis of bikaverin, a red pigment also considered as a mycotoxin. This chain is Nitrogen metabolite regulation-like protein bik4, found in Gibberella fujikuroi (strain CBS 195.34 / IMI 58289 / NRRL A-6831) (Bakanae and foot rot disease fungus).